A 324-amino-acid chain; its full sequence is MTASKARIVFMGTPDFAVASLDALIGEGYNVVGVVTIPDKSIGKHQSIPQFSPIKQYALSHEIPLLQPKKLKDPDFLKSLKAWNTDLQVVVSFRLLPEVVWNMPSLGTFNLHASLLPQYRGAAPINWAIINGEKETGVTTFFLDYEIDTGKIIAQECIPIKETDNAGTIHDELMYLGAKLVVKTTNDILSGTVKLISQDETNLGKQKLKIAPKIFREVCKIDWNKTTREIHNFIRGLSPYPGAWTELTCVKGMTFPFKIFETEKADCHDYSLPVGTIVSDKKVYIDVRTKDGFIRLRNVQLAGKKRMPVTDFLKGNAYLLSLHF.

114-117 (SLLP) contributes to the (6S)-5,6,7,8-tetrahydrofolate binding site.

It belongs to the Fmt family.

The enzyme catalyses L-methionyl-tRNA(fMet) + (6R)-10-formyltetrahydrofolate = N-formyl-L-methionyl-tRNA(fMet) + (6S)-5,6,7,8-tetrahydrofolate + H(+). In terms of biological role, attaches a formyl group to the free amino group of methionyl-tRNA(fMet). The formyl group appears to play a dual role in the initiator identity of N-formylmethionyl-tRNA by promoting its recognition by IF2 and preventing the misappropriation of this tRNA by the elongation apparatus. The polypeptide is Methionyl-tRNA formyltransferase (Azobacteroides pseudotrichonymphae genomovar. CFP2).